A 150-amino-acid chain; its full sequence is Probable cyclase FGR4 (150 aa).

It participates in secondary metabolite biosynthesis. Probable cyclase; part of the gene cluster that mediates the biosynthesis of the tetraketides fugralins such as linear fugralin A and cyclic fugralin B, volatile compounds that play a role in the asexual reproductive cycle but are not involved in pathogenicity. Fugralin B is similar to fugralin A except for a cyclization between the carboxylic acid C-8 and the alcohol on C-4 resulting in a six membered lactone ring, probably catalyzed by the cyclase FGR4. One of the key features of fugralins is the presence of a double methyl group, which is only rarely encountered in fungal secondary metabolites. As the fugralins cluster does not contain an independent methyltransferase, the PKS FGR1 is probably responsible for adding two methyl groups to the same carbon atom. The exact role of the individual cluster genes remains unknown and further work is needed to unravel the biosynthetic pathway. This chain is Probable cyclase FGR4, found in Gibberella zeae (strain ATCC MYA-4620 / CBS 123657 / FGSC 9075 / NRRL 31084 / PH-1) (Wheat head blight fungus).